The sequence spans 300 residues: Nuclear egress protein 1 (300 aa).

The segment at 90–217 (CLSLSGMGYY…YIVFPGKALH (128 aa)) adopts a CCCH-type zinc-finger fold.

This sequence belongs to the herpesviridae NEC1 protein family. In terms of assembly, forms a heterohexameric complex with NEC2. Interacts with capsid vertex specific component 2/CVC2; this interaction directs the capsid to the host inner nuclear membrane to initiate budding. Post-translationally, phosphorylated at serine residues in the N-terminus. This phosphorylation regulates the localization within the inner nuclear membrane.

The protein resides in the host nucleus inner membrane. Its function is as follows. Plays an essential role in virion nuclear egress, the first step of virion release from infected cell. Within the host nucleus, NEC1 interacts with the newly formed capsid through the vertexes and directs it to the inner nuclear membrane by associating with NEC2. Induces the budding of the capsid at the inner nuclear membrane as well as its envelopment into the perinuclear space. There, the NEC1/NEC2 complex promotes the fusion of the enveloped capsid with the outer nuclear membrane and the subsequent release of the viral capsid into the cytoplasm where it will reach the secondary budding sites in the host Golgi or trans-Golgi network. This chain is Nuclear egress protein 1, found in Gallid herpesvirus 2 (strain Chicken/Md5/ATCC VR-987) (GaHV-2).